The primary structure comprises 340 residues: Coproporphyrin III ferrochelatase (340 aa).

Residues Ser-52 and Tyr-121 each contribute to the Fe-coproporphyrin III site. Fe(2+) is bound by residues His-177 and Glu-260.

This sequence belongs to the ferrochelatase family.

It localises to the cytoplasm. The enzyme catalyses Fe-coproporphyrin III + 2 H(+) = coproporphyrin III + Fe(2+). It functions in the pathway porphyrin-containing compound metabolism; protoheme biosynthesis. Involved in coproporphyrin-dependent heme b biosynthesis. Catalyzes the insertion of ferrous iron into coproporphyrin III to form Fe-coproporphyrin III. This Mycobacteroides abscessus (strain ATCC 19977 / DSM 44196 / CCUG 20993 / CIP 104536 / JCM 13569 / NCTC 13031 / TMC 1543 / L948) (Mycobacterium abscessus) protein is Coproporphyrin III ferrochelatase.